Reading from the N-terminus, the 49-residue chain is Large ribosomal subunit protein bL33 (49 aa).

The protein belongs to the bacterial ribosomal protein bL33 family.

This Pelotomaculum thermopropionicum (strain DSM 13744 / JCM 10971 / SI) protein is Large ribosomal subunit protein bL33.